We begin with the raw amino-acid sequence, 299 residues long: 4-hydroxybenzoate octaprenyltransferase (299 aa).

Transmembrane regions (helical) follow at residues 33–53, 56–76, 105–125, 151–171, 180–200, 214–234, 247–267, and 278–298; these read VGFL…ADGV, WWTL…GCVI, NALL…LTMN, LPQV…FAAI, WLLY…YAMV, AILF…LMLL, HTYW…FIIA, and AFMH…LATT.

Belongs to the UbiA prenyltransferase family. It depends on Mg(2+) as a cofactor.

The protein localises to the cell inner membrane. The enzyme catalyses all-trans-octaprenyl diphosphate + 4-hydroxybenzoate = 4-hydroxy-3-(all-trans-octaprenyl)benzoate + diphosphate. Its pathway is cofactor biosynthesis; ubiquinone biosynthesis. Its function is as follows. Catalyzes the prenylation of para-hydroxybenzoate (PHB) with an all-trans polyprenyl group. Mediates the second step in the final reaction sequence of ubiquinone-8 (UQ-8) biosynthesis, which is the condensation of the polyisoprenoid side chain with PHB, generating the first membrane-bound Q intermediate 3-octaprenyl-4-hydroxybenzoate. The polypeptide is 4-hydroxybenzoate octaprenyltransferase (Xylella fastidiosa (strain M23)).